Reading from the N-terminus, the 282-residue chain is Parvulin-like PPIase (282 aa).

The first 20 residues, 1–20 (MKKLSVIFLSVSMLSGIAFA), serve as a signal peptide directing secretion. The 94-residue stretch at 138 to 231 (KEQIKVAHIL…FGWHIIKVLE (94 aa)) folds into the PpiC domain.

It belongs to the PpiC/parvulin rotamase family.

Its subcellular location is the cell outer membrane. The enzyme catalyses [protein]-peptidylproline (omega=180) = [protein]-peptidylproline (omega=0). This Rickettsia conorii (strain ATCC VR-613 / Malish 7) protein is Parvulin-like PPIase (plp).